We begin with the raw amino-acid sequence, 949 residues long: Thrombospondin-4-B (949 aa).

An N-terminal signal peptide occupies residues 1-22 (MAGTMHLLTAVSLILMLSSANA). Residues 23 to 198 (ESTVYNLLTS…LEELKLAYGD (176 aa)) form the Laminin G-like domain. 21 cysteine pairs are disulfide-bonded: Cys-276/Cys-287, Cys-281/Cys-296, Cys-299/Cys-310, Cys-316/Cys-327, Cys-321/Cys-336, Cys-339/Cys-363, Cys-369/Cys-383, Cys-377/Cys-392, Cys-395/Cys-407, Cys-413/Cys-427, Cys-421/Cys-437, Cys-439/Cys-450, Cys-466/Cys-471, Cys-476/Cys-496, Cys-512/Cys-532, Cys-535/Cys-555, Cys-571/Cys-591, Cys-594/Cys-614, Cys-632/Cys-652, Cys-672/Cys-692, and Cys-708/Cys-929. An EGF-like 1; calcium-binding domain is found at 312–349 (DVDECQFNPCFPGVRCVNMAPGFRCEACPLGFTGKPLE). The 44-residue stretch at 365 to 408 (DIDECKGPDNGGCTANSICVNSVGSYQCGRCKTGFTGDQIRGCK) folds into the EGF-like 2; calcium-binding domain. The region spanning 409 to 451 (PEKSCGNRLQNPCDPNAQCTEERDGTITCQCGIGWAGNGYLCG) is the EGF-like 3 domain. 8 TSP type-3 repeats span residues 452–484 (KDTD…NSGQ), 485–520 (EDAD…NINQ), 521–543 (QNSD…NPDQ), 544–579 (RDTD…NRDQ), 580–602 (LDRD…NPNQ), 603–640 (SDID…NSSQ), 641–680 (LDTD…NPEQ), and 681–716 (IDDN…EITL). The disordered stretch occupies residues 578 to 671 (DQLDRDGDGV…PDSLPPGPDN (94 aa)). N-linked (GlcNAc...) asparagine glycans are attached at residues Asn-601 and Asn-637. Positions 649-660 (GDECDDDDDNDG) are enriched in acidic residues. One can recognise a TSP C-terminal domain in the interval 720–934 (RAYQTVVLDP…LKYRCNDTIP (215 aa)). Asn-930 carries N-linked (GlcNAc...) asparagine glycosylation.

The protein belongs to the thrombospondin family. Homotrimer; disulfide-linked.

It localises to the endoplasmic reticulum. It is found in the sarcoplasmic reticulum. The protein resides in the secreted. The protein localises to the extracellular space. Its subcellular location is the extracellular matrix. Functionally, adhesive glycoprotein that mediates cell-to-cell and cell-to-matrix interactions and may be involved in various processes including cellular proliferation, migration, adhesion and attachment. May play a role in ER stress response. This chain is Thrombospondin-4-B (thbs4b), found in Danio rerio (Zebrafish).